We begin with the raw amino-acid sequence, 639 residues long: E3 ubiquitin-protein ligase RNF12 (639 aa).

Disordered regions lie at residues 1-28, 67-403, and 467-534; these read MESA…RLDR, RLQQ…ESER, and NDTD…GGVT. Over residues 11-21 the composition is skewed to low complexity; it reads STEQSESQRQS. Composition is skewed to polar residues over residues 110-138 and 147-166; these read SVRQ…NPNS and INVN…QSSE. Residues 213-228 show a composition bias toward basic and acidic residues; the sequence is RSPDQRRTRARTDRSR. Positions 244 to 253 are enriched in polar residues; sequence HSSSQTVDAS. Low complexity predominate over residues 269-286; that stretch reads SSQMQNSSSSNETEGSSR. Positions 290 to 302 are enriched in polar residues; it reads HITARQQALGTEG. Low complexity-rich tracts occupy residues 303–327 and 335–348; these read QSQS…SQST and SRSS…DSSS. Polar residues predominate over residues 349-358; the sequence is NAETTGTGQR. Over residues 372 to 382 the composition is skewed to basic and acidic residues; that stretch reads RPGDYRQRDSI. The segment covering 383–399 has biased composition (polar residues); it reads ANRTRSRSQTPNNTVTY. Pro residues-rich tracts occupy residues 473 to 482 and 493 to 506; these read NPTPVSPPAA and PEPP…PEPV. The RING-type; atypical zinc finger occupies 585 to 626; sequence CSVCITEYTEGNKLRKLPCSHEYHVHCIDRWLSENSTCPICR. The PDZ-binding signature appears at 636 to 639; the sequence is ESIV.

This sequence belongs to the RNF12 family. As to quaternary structure, forms homodimers through the C-terminal region. The N-terminus interacts with the homeobox of LIM/homeobox factor lhx1/lim1, with lhx3/lim3 and lhx5/lim5, and with the N-terminus of ldb1.

The protein localises to the nucleus. It carries out the reaction S-ubiquitinyl-[E2 ubiquitin-conjugating enzyme]-L-cysteine + [acceptor protein]-L-lysine = [E2 ubiquitin-conjugating enzyme]-L-cysteine + N(6)-ubiquitinyl-[acceptor protein]-L-lysine.. Its pathway is protein modification; protein ubiquitination. Functionally, acts as an E3 ubiquitin-protein ligase specific for ldb1, mediating ubiquitination and proteasome-dependent degradation of excess ldb1 in a RING-dependent manner. Does not degrade ldb1 bound to lhx1/lim1, nor lim1 itself and thus contributes to the establishment of proper ldb1-lhx1/lim1 stoichiometry and the formation of a ldb1-lhx1/lim1 complex. Interferes with Spemann organizer function and suppresses secondary axis formation induced by ldb1 and lhx1/lim1. The protein is E3 ubiquitin-protein ligase RNF12 of Xenopus tropicalis (Western clawed frog).